Consider the following 314-residue polypeptide: Olfactory receptor 11H7 (314 aa).

The Extracellular segment spans residues 1–24 (MNNSQISTVTQFVLLGFPGPWKIQ). Residue Asn-2 is glycosylated (N-linked (GlcNAc...) asparagine). Residues 25–45 (IIFFSMILLVYIFTLTGNMAI) form a helical membrane-spanning segment. The Cytoplasmic portion of the chain corresponds to 46 to 57 (ICAVRWDHRLHT). Residues 58-78 (PMYVLLANFSFLEIWYVTCTV) form a helical membrane-spanning segment. Topologically, residues 79–97 (PNMLVNFFSKTKTISFSGC) are extracellular. A disulfide bridge connects residues Cys-97 and Cys-179. Residues 98 to 118 (FTQFHFFFSLGTTECFFLCVM) traverse the membrane as a helical segment. The Cytoplasmic segment spans residues 119 to 142 (AYDRYLAICHPLHYPSIMTGQLCG). Residues 143 to 163 (ILVSLCWLIGFLGHSISIFFI) form a helical membrane-spanning segment. Residues 164–201 (FQLPFCGPNIIDHFLCDVDPLMALSSAPTHIIGHVFHS) are Extracellular-facing. Residues 202-222 (VSSLFINLTMVYILGSYTLVL) traverse the membrane as a helical segment. At 223–244 (RTVLQVPSSAGWQKAISTCGSH) the chain is on the cytoplasmic side. Residues 245-265 (LVVVSLFYGAIMLMYVSPTPG) form a helical membrane-spanning segment. At 266–271 (NSVAMH) the chain is on the extracellular side. A helical membrane pass occupies residues 272 to 292 (KLITLIYSVVTPVLNPLIYSL). Residues 293-314 (RNKDMKYALHHVFCGMRIIQRS) lie on the Cytoplasmic side of the membrane.

This sequence belongs to the G-protein coupled receptor 1 family.

The protein localises to the cell membrane. In terms of biological role, odorant receptor. Activated by isovaleric acid. The protein is Olfactory receptor 11H7 (OR11H7) of Homo sapiens (Human).